Here is a 259-residue protein sequence, read N- to C-terminus: Glutamate racemase (259 aa).

Substrate-binding positions include 7–8 and 39–40; these read DS and YG. Residue Cys-70 is the Proton donor/acceptor of the active site. 71–72 contacts substrate; that stretch reads NT. Cys-180 (proton donor/acceptor) is an active-site residue. Position 181 to 182 (181 to 182) interacts with substrate; the sequence is TH.

It belongs to the aspartate/glutamate racemases family.

The catalysed reaction is L-glutamate = D-glutamate. It functions in the pathway cell wall biogenesis; peptidoglycan biosynthesis. In terms of biological role, provides the (R)-glutamate required for cell wall biosynthesis. This chain is Glutamate racemase, found in Persephonella marina (strain DSM 14350 / EX-H1).